Here is a 345-residue protein sequence, read N- to C-terminus: uncharacterized protein (345 aa).

3 Solcar repeats span residues 80–153, 162–246, and 256–339; these read MSFF…MKSR, SDPQ…LKLK, and NLAH…ILNF. The next 6 helical transmembrane spans lie at 83-103, 128-148, 220-240, 262-282, 296-316, and 319-339; these read FEAL…LFPI, GLGS…TTYE, AGYG…FPIW, AISG…FDVV, VFTI…KGIV, and VLWL…ILNF.

It belongs to the mitochondrial carrier (TC 2.A.29) family.

It is found in the mitochondrion inner membrane. This is an uncharacterized protein from Schizosaccharomyces pombe (strain 972 / ATCC 24843) (Fission yeast).